The following is a 629-amino-acid chain: Methyl-accepting chemotaxis protein PctB (629 aa).

Topologically, residues 1–10 are cytoplasmic; the sequence is MIKSLKFSHK. The chain crosses the membrane as a helical span at residues 11–31; that stretch reads ILLAAALVVIATFSLFTLYND. The Periplasmic segment spans residues 32–276; the sequence is SLQRASIRED…AYAMLTKLRT (245 aa). A Cache domain is found at 37–260; sequence SIREDLEDYL…LSGLDWYIGI (224 aa). L-arginine is bound by residues tyrosine 109, serine 115, tyrosine 121, 126 to 128, glutamate 146, and aspartate 173; that span reads RPW. L-glutamine-binding positions include serine 115, tyrosine 121, 126–128, 144–146, and aspartate 173; these read RPW and YME. A helical membrane pass occupies residues 277–297; the sequence is SAIVAALIAVVAIVLLLGMLI. Residues 298–352 enclose the HAMP domain; the sequence is RVLMQPLTDMGRAMQDIAQGEGDLTKRLKVTSNDEFGALAISFNRFVERIHESIR. Over 298–629 the chain is Cytoplasmic; sequence RVLMQPLTDM…LRQLVDSFKI (332 aa). The Methyl-accepting transducer domain maps to 357 to 593; it reads TARQLHDVAQ…SLNMDITEIN (237 aa). A disordered region spans residues 405–424; it reads RNAADASHHASDANHQAEDG. Residues 410–424 show a composition bias toward basic and acidic residues; that stretch reads ASHHASDANHQAEDG.

The protein belongs to the methyl-accepting chemotaxis (MCP) protein family. As to quaternary structure, monomer in the absence and presence of ligands.

It localises to the cell inner membrane. Its function is as follows. Chemotactic-signal transducers respond to changes in the concentration of attractants and repellents in the environment, transduce a signal from the outside to the inside of the cell, and facilitate sensory adaptation through the variation of the level of methylation. Responds to L-Arg, L-Gln, L-Ala, L-Glu, L-Lys, L-Met and L-Tyr. Also involved in repellent responses to trichloroethylene (TCE), chloroform and methylthiocyanate. In Pseudomonas aeruginosa (strain ATCC 15692 / DSM 22644 / CIP 104116 / JCM 14847 / LMG 12228 / 1C / PRS 101 / PAO1), this protein is Methyl-accepting chemotaxis protein PctB (pctB).